A 353-amino-acid chain; its full sequence is uncharacterized protein (353 aa).

An N-terminal signal peptide occupies residues 1–30; that stretch reads MHLRHLFSPRLRGSLLLGSLLVASSFSTLA.

This is an uncharacterized protein from Salmonella typhi.